A 2778-amino-acid chain; its full sequence is MTFDTRRHTTGQPGSTAPSSSSSTTSTTTTTTSPAQSAGSGSGIGTGTGTVANSSLPGGGSGSLDGNQDQQPATDSQSSDDVAASLSANSVDSTITIVPPEKLISSFPTTKLRSLTQKISNPRWVVPVLPEQELEVLLNAAIELTQAGVDHDCEPCVEFYRNGLSTSFAKILTDEAVNSWKNNIHHCILVSCGKLLHLIAIHMQRDNPYLLDLLAIVFDPENKFNTFNAGRQPECFAAPDYIWGQLDSNKMYARPPPEPKNARGWLVDLINRFGQLGGFDNLLERFNIGLELLKRNQNKCTGKNISVEGRVENGAQDNRLTLALIHSLLRPFGQCYELLMPATIAKYFMPTWNVVLDLLDSFTDEELKREVKPEGRNDYINGIVKSARLLASRLTGQEELIRDLEMFRLKMILRLLQVSSFNGKMNALNEINKVLSSVAYFSHRSQPLPHCMPEDEMDWLTADRMAQWIKSSDVLGVVLKDSLHQPQYVEKLEKIIRFLIKEQALTLDDLDAVWRAQAGKHEAIVKNVHDLLAKLAWDFTPEQLDHLFEAFQASMTTANKRQRERLLELIRRLAEDDKNGVMAQKVLKLFWTLAHSQEVPPEVLDQALGAHVKILDYSCSQERDAQKTIWLDKCVDELKSGDGWVLPALRLIRDICCLYDTTTNHAQRTQTSTNRQQVIERLQNDYSLVILVTNSLTAYMEKVRQMVTDSPGLDATRILIDGRFPHHVQIAERLEFLKFLLKDGQLWLCADQAKQIWHCLAVNAVFPADREECFRWFGKLMGEEPDLDPGINKDFFENNILQLDPHLLTESGIKCFERFFKAVNSKEDKLKAIHRGYMLDNEDLIGKDYLWRVITTGGEEIASKAIDLLKEVSTALGPRLQENIAEFHEMFIGECCSRLRTHYGNIVILGKTQLQEELDAPDQSDNTNDESKDSKMRFIEAEKMCRILKVLQEYVKECDRSFSGDRVHLPLSRVTRGKNTILYIRFQNPGRSIDDMEIVTHSNETMAAFKRNLLKRIKGTSTANIKVDLFYANDEMIGVSDEINPLYQYTIRDKMNLTAKLTPVGTGLASSPDSSSDSSTGSPPRPCPDMQRVESESTLPGVIISQNYQYTEFFLKLYQLGSDLEHGRLRDSAKVLLHLLPCDRQTIRQLKIMCKVPKAAVTVAVTGDKIAKDEEEKLYPTEQAGIEDEEEHCTPEQMFLHPTPAQVLYNLSVLHGLLIPALDPLGESALLVQSAWMHSGCAHFVLELLTKNNFLPSADMHTKRASFQCVLRLAKLFLYIVGSVLSRVGDEPMICDLDNGSRSQVDILKQNFSTMPSSSQGTLRAISAKLAVILAREMLSASPEGDRCRTLFSSTLQWSCPDISTIKAVVQLAWASSCGNLQALGNSSGDFEDEVIVPDGQDFSMCKEALEVLTISFILNPSANEALTSDPNWPKFITSIVLKNPLRHVRQVASEQLFLASTYCAGDRRPFVYMVNLLVGALKTLVPQYESTCAEFFSVLCRTLSYGCIYNWPLQISEGLLGDEIKWLQRIRENVHATGDTQVHEELLEGHLCLAKELMFFLGADSKAQLNELIHELIDDFLFTASREFLHLRRHGSLRQDTVPPPVCRSPHTIAAACDLLIALCQLCVPNMKLLTNTLIDFVCTDTDPLREWDYLPPVGARPTKGFCGLKNAGATCYMNSVLQQLYMVPAVRVGILRAHGAATTDGEDFSGDSDLTGGGLGSALFSGPASALVSLPSSSSTIEDGLHDVRKNYHVVILKHVQAIFAHLGHSALQYYVPRGLWTHFKLLGEPVNLREQQDAVEFFMSLLESLDEGLKALGQPQLMNATLGGSFSDQKICQECPHRYSKEEPFSVFSVDIRNHSSLTESLEQYVKGELLEGADAYHCDKCDKKVVTVKRVCVKKLPPVLAIQLKRFEYDYERVCAIKFNDYFEFPRILDMEPYTVSGLAKLEGEVVEVGDNCQTNVETTKYELTGIVVHSGQASGGHYFSYILSKNPANGKCQWYKFDDGEVTECKMHEDEEMKAECFGGEYMGETYDNNLKRMQYRRQKRWWNAYMLFYTRCDQTPVQYEPSVEQLSLAESRNMVLPLPKPIERSVRHQNIRFLHSRSIFSVEFFNFIKKLVSCNLLSARSNKITPAAEELSLLGVQLASQFLFHTGFRTKKSLRGPVMEWYDALSHHIRSSALVRKWFANHALLSPPSRLGEYILMAPSPDVRTVFVKLVVFFCHFAINDEPLTGYDGANLCEQVLISVLRLLKSEAADYGKHLPHYFSLFSMYVGLGTREKQQLLRLNVPLQFIQVALDDGPGPAIKYQYPEFSKLHQVVSHLIRCSDVSEKCQSSNQNARPLSNPFKDPNVAHEELTPLSTECMDLLFNRTGYIKKVIEDTNVGDEGLKLLQYCSWENPHFSRAVLTELLWQCGFAYCHDMRHHTDLLLNILLIDDSWQHHRIHNALNGVAEEREGLLETIQRAKTHYQKRAYQIIKCLTQLFHKSPIALQMLHTNSNITRHWSIAVEWLQGELDRQRGIGCQYNSYSWSPPAQSNDNTNGYMLERSQSAKNTWSMAFELCPDEVSEKTDENNEPNLETNMDENKSEPVAQPGGVLEGSTGGTEQLPENKTPTTSSPSTAAWPARGDSNAIPRLSRQLFGAYTSTGSGSTSGGSAPTSALTTTAGSGANSETESSAQETTGETTINGLTNSLDQMEITAKKKCRRVIIKKLVESKDEEDATTATTAATTEVTTSPATAIATAATLEPAGMSELTTMVEKNLIISQENPQAKSSLQ.

Residues 1 to 85 (MTFDTRRHTT…SQSSDDVAAS (85 aa)) form a disordered region. A compositionally biased stretch (low complexity) spans 10 to 39 (TGQPGSTAPSSSSSTTSTTTTTTSPAQSAG). Polar residues predominate over residues 71–85 (QPATDSQSSDDVAAS). Ser-924 bears the Phosphoserine mark. The disordered stretch occupies residues 1065–1094 (GTGLASSPDSSSDSSTGSPPRPCPDMQRVE). Positions 1070–1082 (SSPDSSSDSSTGS) are enriched in low complexity. A USP domain is found at 1668–2062 (CGLKNAGATC…NAYMLFYTRC (395 aa)). The active-site Nucleophile is the Cys-1677. Residue His-1986 is the Proton acceptor of the active site. 2 disordered regions span residues 2568–2632 (VSEK…GDSN) and 2644–2691 (AYTS…INGL). Low complexity-rich tracts occupy residues 2614–2627 (TPTT…AWPA) and 2644–2671 (AYTS…GSGA). A compositionally biased stretch (polar residues) spans 2672–2691 (NSETESSAQETTGETTINGL).

Belongs to the peptidase C19 family. Interacts with imd. Ubiquitinated. Ubiquitination is enhanced by the expression of imd. As to expression, eye disks and ovaries. Expressed in larval fat body.

The catalysed reaction is Thiol-dependent hydrolysis of ester, thioester, amide, peptide and isopeptide bonds formed by the C-terminal Gly of ubiquitin (a 76-residue protein attached to proteins as an intracellular targeting signal).. In terms of biological role, ubiquitin C-terminal hydrolase involved in development and the imd/NF-kappa-B (IMD) signaling cascade. Required for eye and embryo development, and plays a role in compound eye assembly and oogenesis respectively. In the larval eye disks, cells outside the assembling facets require this protein for short-range cell interactions that prevent the mystery cells from becoming photoreceptors. Also required for nuclear migration and cellularization in early embryogenesis and could play a role in pole cell determination, development or function. Regulates the IMD signaling cascade at later stages of infection (around 6 hours post-infection) by inhibiting the expression of the antimicrobial peptides Dpt and Dro. Acts by modulating the state of imd polyubiquitination and/or stability; a function which appears to be independent of its enzymatic activity. In turn, imd enhances the polyubiquitination and stability of faf suggesting that they may form a regulatory feedback mechanism within the Imd pathway. This chain is Probable ubiquitin carboxyl-terminal hydrolase FAF (faf), found in Drosophila melanogaster (Fruit fly).